The chain runs to 370 residues: Aminomethyltransferase (370 aa).

This sequence belongs to the GcvT family. In terms of assembly, the glycine cleavage system is composed of four proteins: P, T, L and H.

It carries out the reaction N(6)-[(R)-S(8)-aminomethyldihydrolipoyl]-L-lysyl-[protein] + (6S)-5,6,7,8-tetrahydrofolate = N(6)-[(R)-dihydrolipoyl]-L-lysyl-[protein] + (6R)-5,10-methylene-5,6,7,8-tetrahydrofolate + NH4(+). Its function is as follows. The glycine cleavage system catalyzes the degradation of glycine. This chain is Aminomethyltransferase, found in Prochlorococcus marinus (strain MIT 9301).